A 267-amino-acid polypeptide reads, in one-letter code: 3-deoxy-manno-octulosonate cytidylyltransferase 2 (267 aa).

Belongs to the KdsB family.

The protein localises to the cytoplasm. The enzyme catalyses 3-deoxy-alpha-D-manno-oct-2-ulosonate + CTP = CMP-3-deoxy-beta-D-manno-octulosonate + diphosphate. It participates in nucleotide-sugar biosynthesis; CMP-3-deoxy-D-manno-octulosonate biosynthesis; CMP-3-deoxy-D-manno-octulosonate from 3-deoxy-D-manno-octulosonate and CTP: step 1/1. Its pathway is bacterial outer membrane biogenesis; lipopolysaccharide biosynthesis. Functionally, activates KDO (a required 8-carbon sugar) for incorporation into bacterial lipopolysaccharide in Gram-negative bacteria. In Burkholderia ambifaria (strain MC40-6), this protein is 3-deoxy-manno-octulosonate cytidylyltransferase 2.